The chain runs to 628 residues: Voltage-gated potassium channel KCNC4 (628 aa).

Disordered stretches follow at residues 1–24 and 62–88; these read MISSVCVSSYRGRKSGNKPPSKTC and LAWLADPDGGGRPESDGGGAGSSGSSG. Residues 1–28 form an inactivation gate region; the sequence is MISSVCVSSYRGRKSGNKPPSKTCLKEE. At 1–230 the chain is on the cytoplasmic side; the sequence is MISSVCVSSY…EDPYSSRAAR (230 aa). Residues Ser-8, Ser-9, Ser-15, and Ser-21 each carry the phosphoserine modification. Residues 77-88 show a composition bias toward gly residues; it reads DGGGAGSSGSSG. Positions 120, 126, 147, and 148 each coordinate Zn(2+). The chain crosses the membrane as a helical span at residues 231 to 251; it reads VVAFASLFFILVSITTFCLET. N-linked (GlcNAc...) asparagine glycosylation is found at Asn-260 and Asn-269. A helical transmembrane segment spans residues 282–302; that stretch reads EPILTYIEGVCVMWFTLEFLV. Residues 303–316 are Cytoplasmic-facing; that stretch reads RIVCCPDTLDFVKN. A helical membrane pass occupies residues 317 to 337; that stretch reads LLNIIDFVAILPFYLEVGLSG. A helical; Voltage-sensor transmembrane segment spans residues 349–368; that stretch reads FLRVVRFVRILRIFKLTRHF. The Cytoplasmic segment spans residues 369-384; the sequence is VGLRVLGHTLRASTNE. The helical transmembrane segment at 385–405 threads the bilayer; it reads FLLLIIFLALGVLIFATMIYY. The K(+) site is built by Thr-440, Leu-441, Gly-442, and Tyr-443. The Selectivity filter signature appears at 440 to 445; it reads TLGYGD. A helical transmembrane segment spans residues 456-476; sequence VGALCALAGVLTIAMPVPVIV. Residues 477-628 lie on the Cytoplasmic side of the membrane; sequence NNFGMYYSLA…CVPVSHTCAL (152 aa). The segment at 493–584 is disordered; it reads PKKRKKHVPR…RRALRRSGTR (92 aa). Residues 531–546 are compositionally biased toward basic and acidic residues; sequence AREEGVVERKRADSKQ.

Belongs to the potassium channel family. C (Shaw) (TC 1.A.1.2) subfamily. Kv3.4/KCNC4 sub-subfamily. As to quaternary structure, homotetramer. Heterotetramer of potassium channel proteins. Post-translationally, phosphorylation of serine residues in the inactivation gate inhibits rapid channel closure.

It localises to the membrane. The enzyme catalyses K(+)(in) = K(+)(out). Functionally, voltage-gated potassium channel that opens in response to the voltage difference across the membrane, forming a potassium-selective channel through which potassium ions pass in accordance with their electrochemical gradient. The channel displays rapid activation and inactivation kinetics. This chain is Voltage-gated potassium channel KCNC4, found in Mus musculus (Mouse).